Here is a 638-residue protein sequence, read N- to C-terminus: DNA mismatch repair protein MutL (638 aa).

Residues 404-433 (FGTQTNAFGSMATPRDNSRGNYSAGESRQR) form a disordered region.

It belongs to the DNA mismatch repair MutL/HexB family.

Functionally, this protein is involved in the repair of mismatches in DNA. It is required for dam-dependent methyl-directed DNA mismatch repair. May act as a 'molecular matchmaker', a protein that promotes the formation of a stable complex between two or more DNA-binding proteins in an ATP-dependent manner without itself being part of a final effector complex. This Shewanella baltica (strain OS195) protein is DNA mismatch repair protein MutL.